The sequence spans 318 residues: Type II methyltransferase M.HaeII (318 aa).

One can recognise an SAM-dependent MTase C5-type domain in the interval 4-304 (YKTIDLFAGI…GSMINSLNMA (301 aa)). Cysteine 73 is an active-site residue.

Belongs to the class I-like SAM-binding methyltransferase superfamily. C5-methyltransferase family.

It carries out the reaction a 2'-deoxycytidine in DNA + S-adenosyl-L-methionine = a 5-methyl-2'-deoxycytidine in DNA + S-adenosyl-L-homocysteine + H(+). Functionally, a methylase, recognizes the double-stranded sequence 5'-RGCGCY-3', methylates C-? on both strands, and protects the DNA from cleavage by the HaeII endonuclease. The sequence is that of Type II methyltransferase M.HaeII (haeIIM) from Haemophilus aegyptius.